Reading from the N-terminus, the 358-residue chain is Myb family transcription factor IPN2 (358 aa).

The disordered stretch occupies residues 1–20 (MERMFPPKKPSTMNSHDRPM). The 61-residue stretch at 32 to 92 (TDPKPRLRWT…HLQKFRLGKQ (61 aa)) folds into the HTH myb-type domain. The segment at residues 63–88 (PKTIMRVMGVKGLTLYHLKSHLQKFR) is a DNA-binding region (H-T-H motif). Residues 127–171 (NMNEMQIEVQRRLHEQLEVQKHLQLRIEAQGKYMQSILEKAYQTL) are a coiled coil. The short motif at 139 to 144 (LHEQLE) is the LHEQLE element. Positions 310–358 (IYDSKPEEKKFDASMKLERPSPRRAPLGERMSPMITTGTMAQGRSSPFG) are disordered. Positions 311–330 (YDSKPEEKKFDASMKLERPS) are enriched in basic and acidic residues. Polar residues predominate over residues 343-358 (MITTGTMAQGRSSPFG).

This sequence belongs to the MYB-CC family. As to quaternary structure, interacts with NSP2. Expressed in leaves, stems, nodules and roots.

It localises to the nucleus. Transcriptional regulator required for Nod-factor-induced gene expression. Transcription activator involved in the induction of NIN and ENOD40 genes, which are required for rhizobial infection and early nodule development. Possesses strong transactivation activity in vitro. Does not seem to contribute to the early steps of the arbuscular mycorrhizal fungus infection and colonization processes in roots. This chain is Myb family transcription factor IPN2, found in Lotus japonicus (Lotus corniculatus var. japonicus).